We begin with the raw amino-acid sequence, 1335 residues long: Probable serine/threonine-protein kinase ndrC (1335 aa).

Disordered regions lie at residues 1-70 (MSRK…KKGS), 85-158 (VDTH…LIPS), 276-447 (LPPP…SPLN), and 462-603 (TTTT…NNNK). A compositionally biased stretch (polar residues) spans 8-17 (NRSSSSNSIE). Over residues 27 to 41 (SNISNSSNINCNNSS) the composition is skewed to low complexity. Over residues 55 to 70 (RSKHSSPIHSLKKKGS) the composition is skewed to basic residues. Residues 89-117 (SSSNSNNNSSSNNNNNNNNHNINSSSESS) show a composition bias toward low complexity. Positions 118–132 (TPTTPRSSFTPQVTM) are enriched in polar residues. The span at 133–153 (NSNQSSGNNSPQLSSRSSSQS) shows a compositional bias: low complexity. Over residues 276-288 (LPPPSQQQLPPPQ) the composition is skewed to pro residues. Composition is skewed to low complexity over residues 289 to 331 (SHQQ…TPQS), 345 to 368 (NQQQ…SPNK), 382 to 396 (SPSP…SPSS), 412 to 424 (PTPL…SPSS), 437 to 447 (PSSFSGGSPLN), and 462 to 484 (TTTT…TTIS). Over residues 485–497 (NPNYTQNLPTTPL) the composition is skewed to polar residues. The segment covering 498–507 (SNSSSNNNNN) has biased composition (low complexity). Residues 508–528 (GSFITLQDTTNNKSIINNNRE) show a composition bias toward polar residues. Over residues 540 to 566 (SSGSSNTTSSTTNTTTPSSSSLTTSSG) the composition is skewed to low complexity. Residues 567-581 (KESRDRDSKDKEKDL) show a composition bias toward basic and acidic residues. A compositionally biased stretch (low complexity) spans 586–602 (NNNNNNNNNNNNNNNNN). A coiled-coil region spans residues 586–613 (NNNNNNNNNNNNNNNNNKVEKEKENYCK). The region spanning 718–1019 (FKILTQIGKG…KQDFKNHPFF (302 aa)) is the Protein kinase domain. ATP is bound by residues 724-732 (IGKGGFGQV) and lysine 747. Aspartate 840 (proton acceptor) is an active-site residue. The AGC-kinase C-terminal domain occupies 1020–1106 (KNHNWDEIVN…RKSSALSLSM (87 aa)). Positions 1239–1284 (SQSQPSLANQLQSSSSSPSPSLQSQSQSPSLQSSSKSTPNLSSSLL) are enriched in low complexity. The interval 1239 to 1313 (SQSQPSLANQ…IKKENESEEI (75 aa)) is disordered. A compositionally biased stretch (basic and acidic residues) spans 1287 to 1313 (PVKEELEYKNQTENEVEIKKENESEEI). A coiled-coil region spans residues 1289–1325 (KEELEYKNQTENEVEIKKENESEEIQSLRDQLKEIII).

It belongs to the protein kinase superfamily. AGC Ser/Thr protein kinase family.

The enzyme catalyses L-seryl-[protein] + ATP = O-phospho-L-seryl-[protein] + ADP + H(+). It catalyses the reaction L-threonyl-[protein] + ATP = O-phospho-L-threonyl-[protein] + ADP + H(+). The protein is Probable serine/threonine-protein kinase ndrC (ndrC) of Dictyostelium discoideum (Social amoeba).